Consider the following 514-residue polypeptide: Importin subunit alpha-3 (514 aa).

One can recognise an IBB domain in the interval Met-1–Asp-51. The segment at Met-1–Phe-62 is disordered. Positions Asn-12–Ser-39 are enriched in basic and acidic residues. ARM repeat units follow at residues Ile-101–Gln-142, Thr-143–Tyr-187, Cys-188–Pro-226, Ala-227–Gln-271, Met-272–Gln-311, Thr-312–Gln-353, Val-354–Arg-393, and Pro-394–Gly-436. The disordered stretch occupies residues Gly-485 to Lys-514.

Belongs to the importin alpha family. Forms a complex with an importin beta subunit. May interact with transcription factor cebp-1 (via N-terminus). Interacts with cmk-1; affinity for cmk-1 is increased in the presence of Ca(2+) and calmodulin and leads to increased nuclear accumulation of cmk-1 in FLP neurons upon prolonged heat activation. Expressed in larval and adult germline and somatic tissues, including neurons.

Its subcellular location is the cytoplasm. It is found in the nucleus. In terms of biological role, binds specifically and directly to substrates containing either a simple or bipartite NLS motif. Promotes docking of import substrates to the nuclear envelope. Seems to act as a cytosolic receptor for both simple and bipartite NLS motifs. Necessary for correct nucleoporin localization within the germline. Essential gene for embryonic and larval development. May be dispensable for axon development, but required for axon regeneration in both mechanosensory and motor neurons. Required for oogenic development, ima-1 and ima-2 cannot functionally compensate for loss of ima-3. This chain is Importin subunit alpha-3 (ima-3), found in Caenorhabditis elegans.